A 336-amino-acid polypeptide reads, in one-letter code: Fructose-1,6-bisphosphatase class 1 (336 aa).

Mg(2+)-binding residues include Glu90, Asp112, Leu114, and Asp115. Residues 115–118 (DGSS), Asn211, and Lys277 each bind substrate. Glu283 serves as a coordination point for Mg(2+).

The protein belongs to the FBPase class 1 family. In terms of assembly, homotetramer. Mg(2+) serves as cofactor.

It localises to the cytoplasm. The enzyme catalyses beta-D-fructose 1,6-bisphosphate + H2O = beta-D-fructose 6-phosphate + phosphate. It participates in carbohydrate biosynthesis; gluconeogenesis. The sequence is that of Fructose-1,6-bisphosphatase class 1 from Pseudomonas fluorescens (strain Pf0-1).